Reading from the N-terminus, the 227-residue chain is Large ribosomal subunit protein uL3 (227 aa).

Positions 144–166 (RRGPMAHGSKNHRLPGSTGPGTT) are disordered.

The protein belongs to the universal ribosomal protein uL3 family. In terms of assembly, part of the 50S ribosomal subunit. Forms a cluster with proteins L14 and L19.

Its function is as follows. One of the primary rRNA binding proteins, it binds directly near the 3'-end of the 23S rRNA, where it nucleates assembly of the 50S subunit. This is Large ribosomal subunit protein uL3 from Trichodesmium erythraeum (strain IMS101).